We begin with the raw amino-acid sequence, 143 residues long: Transcriptional regulator MraZ (143 aa).

SpoVT-AbrB domains are found at residues 5–47 and 76–119; these read EFRH…PMKE and ATEC…DEAR.

Belongs to the MraZ family. As to quaternary structure, forms oligomers.

The protein localises to the cytoplasm. It is found in the nucleoid. This is Transcriptional regulator MraZ from Enterococcus hirae.